We begin with the raw amino-acid sequence, 399 residues long: Methylmalonic aciduria type A homolog, mitochondrial (399 aa).

The N-terminal 15 residues, 1–15 (MVVRSLLRVSRLTSA), are a transit peptide targeting the mitochondrion. GTP is bound by residues 131 to 139 (GSPGVGKSS), Asp274, and 310 to 312 (SIM).

The protein belongs to the SIMIBI class G3E GTPase family. ArgK/MeaB subfamily.

The protein localises to the mitochondrion. Functionally, may have GTPase activity. May also bind and hydrolyze ATP. May function as chaperone. Likely to have a role in propionyl-CoA and adenosylcobalamin metabolism. In Caenorhabditis elegans, this protein is Methylmalonic aciduria type A homolog, mitochondrial (mmaa-1).